Consider the following 421-residue polypeptide: Probable mitochondrial chaperone BCS1-A (421 aa).

Residues 1 to 10 lie on the Mitochondrial intermembrane side of the membrane; the sequence is MNHLKDQSKS. The helical transmembrane segment at 11–31 threads the bilayer; that stretch reads IVLGISSGIGIFLISGGINIF. At 32 to 421 the chain is on the mitochondrial matrix side; that stretch reads KNVGQYILNR…VQSITPFNLN (390 aa). Residue 228 to 235 coordinates ATP; that stretch reads GEPGNGKS.

The protein belongs to the AAA ATPase family. BCS1 subfamily.

The protein resides in the mitochondrion inner membrane. The enzyme catalyses ATP + H2O = ADP + phosphate + H(+). Functionally, chaperone necessary for the assembly of mitochondrial respiratory chain complex III. The chain is Probable mitochondrial chaperone BCS1-A (bcs1la) from Dictyostelium discoideum (Social amoeba).